A 354-amino-acid chain; its full sequence is Transcription termination factor 3, mitochondrial (354 aa).

The N-terminal 89 residues, 1–89, are a transit peptide targeting the mitochondrion; it reads MFCSALRNIL…SFNLAAYVNN (89 aa).

Belongs to the mTERF family.

It is found in the mitochondrion. Functionally, binds promoter DNA and regulates initiation of transcription. Regulator of mitochondrial ribosome biogenesis and translation that is essential for development. Required for normal mitochondrial transcription and translation. Required for assembly of mitochondrial respiratory complexes and normal mitochondrial function. Maintains 16S rRNA levels and functions in mitochondrial ribosome assembly by regulating the biogenesis of the 39S ribosomal subunit. The polypeptide is Transcription termination factor 3, mitochondrial (Drosophila melanogaster (Fruit fly)).